Consider the following 834-residue polypeptide: Arf-GAP with coiled-coil, ANK repeat and PH domain-containing protein 3 (834 aa).

The region spanning 268 to 363 (GVVMEGYLFK…WVQAVQASIA (96 aa)) is the PH domain. The disordered stretch occupies residues 375–400 (SERLDRTASPSTSSIDSATDTRERGV). The segment covering 382–392 (ASPSTSSIDSA) has biased composition (polar residues). Positions 403–525 (ESVLQRVQSV…KFLRKAPMAP (123 aa)) constitute an Arf-GAP domain. The segment at 418–441 (CGDCGQPDPRWASINLGVLLCIEC) adopts a C4-type zinc-finger fold. Positions 633 to 653 (SVTEEEGAESEESSGEADGDT) are disordered. The span at 634 to 653 (VTEEEGAESEESSGEADGDT) shows a compositional bias: acidic residues. ANK repeat units follow at residues 702 to 731 (EGKT…DVNQ), 735 to 764 (RGRA…DQHA), and 768 to 797 (EQRD…AEEM).

In terms of biological role, GTPase-activating protein for the ADP ribosylation factor family. The protein is Arf-GAP with coiled-coil, ANK repeat and PH domain-containing protein 3 (ACAP3) of Homo sapiens (Human).